Consider the following 106-residue polypeptide: HIG1 domain family member 2A, mitochondrial (106 aa).

Ala2 bears the N-acetylalanine mark. The HIG1 domain occupies 20 to 106; sequence VIEGLSPTVY…LAVTAMKSRP (87 aa). 2 helical membrane passes run 47-67 and 83-103; these read PVVP…LYSF and IAAQ…TAMK. The Mitochondrial matrix segment spans residues 104 to 106; that stretch reads SRP.

As to quaternary structure, associates with cytochrome c oxidase (COX, complex IV); proposed complex component.

The protein resides in the mitochondrion membrane. It localises to the mitochondrion inner membrane. In terms of biological role, proposed subunit of cytochrome c oxidase (COX, complex IV), which is the terminal component of the mitochondrial respiratory chain that catalyzes the reduction of oxygen to water. May be involved in cytochrome c oxidase activity. May play a role in the assembly of respiratory supercomplexes. In Homo sapiens (Human), this protein is HIG1 domain family member 2A, mitochondrial (HIGD2A).